We begin with the raw amino-acid sequence, 328 residues long: D-cysteine desulfhydrase (328 aa).

Position 51 is an N6-(pyridoxal phosphate)lysine (K51).

Belongs to the ACC deaminase/D-cysteine desulfhydrase family. In terms of assembly, homodimer. The cofactor is pyridoxal 5'-phosphate.

The catalysed reaction is D-cysteine + H2O = hydrogen sulfide + pyruvate + NH4(+) + H(+). In terms of biological role, catalyzes the alpha,beta-elimination reaction of D-cysteine and of several D-cysteine derivatives. It could be a defense mechanism against D-cysteine. In Escherichia coli O157:H7, this protein is D-cysteine desulfhydrase.